A 540-amino-acid polypeptide reads, in one-letter code: Chaperonin GroEL (540 aa).

Residues 30 to 33 (TLGP), Lys-51, 87 to 91 (DGTTT), Gly-415, and Asp-495 each bind ATP.

The protein belongs to the chaperonin (HSP60) family. Forms a cylinder of 14 subunits composed of two heptameric rings stacked back-to-back. Interacts with the co-chaperonin GroES.

It is found in the cytoplasm. It carries out the reaction ATP + H2O + a folded polypeptide = ADP + phosphate + an unfolded polypeptide.. Functionally, together with its co-chaperonin GroES, plays an essential role in assisting protein folding. The GroEL-GroES system forms a nano-cage that allows encapsulation of the non-native substrate proteins and provides a physical environment optimized to promote and accelerate protein folding. The protein is Chaperonin GroEL of Serratia marcescens.